The following is a 295-amino-acid chain: AP-1-like transcription factor YAP4 (295 aa).

3 positions are modified to phosphoserine: Ser85, Ser89, and Ser196. The segment covering 181–202 (ASYFPSNSTPATRKNSATTNLP) has biased composition (polar residues). Residues 181–205 (ASYFPSNSTPATRKNSATTNLPSEE) are disordered. In terms of domain architecture, bZIP spans 237–295 (PLRNTKRAAQNRSAQKAFRQRREKYIKNLEEKSKLFDGLMKENSELKKMIESLKSKLKE). The basic motif stretch occupies residues 239 to 260 (RNTKRAAQNRSAQKAFRQRREK). Residues 262 to 271 (IKNLEEKSKL) are leucine-zipper.

The protein belongs to the bZIP family. YAP subfamily. As to quaternary structure, homodimer.

Its subcellular location is the cytoplasm. It is found in the nucleus. In terms of biological role, transcription activator involved in the regulation of genes expressed in response to environmental changes and metabolic requirements. According to genome-wide promoter binding and gene expression studies it regulates, among others, genes involved in ribosome biogenesis, and protein synthesis. It may also be involved in pleiotropic drug resistance. When overexpressed it confers increased resistance to cisplatin, the DNA-alkylating agents methylmethanosulfonate, and mitomycin C, the antimalarial drugs quinidine, mefloquine, and chloroquine, and increases cellular tolerance to sodium and lithium. Preferentially binds 5'-TTACTAA-3'. The protein is AP-1-like transcription factor YAP4 (CIN5) of Saccharomyces cerevisiae (strain ATCC 204508 / S288c) (Baker's yeast).